A 158-amino-acid chain; its full sequence is Nascent polypeptide-associated complex subunit beta (158 aa).

2 disordered regions span residues 1 to 40 (MDQA…DKKL) and 119 to 158 (ESYQ…SKVE). A compositionally biased stretch (basic residues) spans 16–31 (GKGKGTPRRKTKKVHK). An NAC-A/B domain is found at 34–99 (GTDDKKLQTS…GEDKELTELV (66 aa)). Over residues 137 to 152 (DDDDDDEIPDLVEGEN) the composition is skewed to acidic residues.

The protein belongs to the NAC-beta family. In terms of assembly, part of the nascent polypeptide-associated complex (NAC), consisting of EGD2 and EGD1. NAC associates with ribosomes via EGD1.

The protein resides in the cytoplasm. It localises to the nucleus. In terms of biological role, component of the nascent polypeptide-associated complex (NAC), a dynamic component of the ribosomal exit tunnel, protecting the emerging polypeptides from interaction with other cytoplasmic proteins to ensure appropriate nascent protein targeting. The NAC complex also promotes mitochondrial protein import by enhancing productive ribosome interactions with the outer mitochondrial membrane and blocks the inappropriate interaction of ribosomes translating non-secretory nascent polypeptides with translocation sites in the membrane of the endoplasmic reticulum. EGD1 may act as a transcription factor that exert a negative effect on the expression of several genes that are transcribed by RNA polymerase II. The polypeptide is Nascent polypeptide-associated complex subunit beta (EGD1) (Ajellomyces capsulatus (strain NAm1 / WU24) (Darling's disease fungus)).